A 394-amino-acid polypeptide reads, in one-letter code: Formate-dependent phosphoribosylglycinamide formyltransferase (394 aa).

N(1)-(5-phospho-beta-D-ribosyl)glycinamide is bound by residues 21 to 22 and glutamate 81; that span reads EL. Residues arginine 113, lysine 154, 159–164, 194–197, and glutamate 202 contribute to the ATP site; these read SSGKGQ and EEFI. Residues 118-307 enclose the ATP-grasp domain; that stretch reads RLAAEELGLP…QFELHVRAIL (190 aa). Mg(2+) contacts are provided by glutamate 266 and glutamate 278. N(1)-(5-phospho-beta-D-ribosyl)glycinamide is bound by residues aspartate 285, lysine 355, and 362-363; that span reads RR.

The protein belongs to the PurK/PurT family. In terms of assembly, homodimer.

The enzyme catalyses N(1)-(5-phospho-beta-D-ribosyl)glycinamide + formate + ATP = N(2)-formyl-N(1)-(5-phospho-beta-D-ribosyl)glycinamide + ADP + phosphate + H(+). It functions in the pathway purine metabolism; IMP biosynthesis via de novo pathway; N(2)-formyl-N(1)-(5-phospho-D-ribosyl)glycinamide from N(1)-(5-phospho-D-ribosyl)glycinamide (formate route): step 1/1. Functionally, involved in the de novo purine biosynthesis. Catalyzes the transfer of formate to 5-phospho-ribosyl-glycinamide (GAR), producing 5-phospho-ribosyl-N-formylglycinamide (FGAR). Formate is provided by PurU via hydrolysis of 10-formyl-tetrahydrofolate. The chain is Formate-dependent phosphoribosylglycinamide formyltransferase from Pelobacter propionicus (strain DSM 2379 / NBRC 103807 / OttBd1).